The sequence spans 399 residues: Enoyl-[acyl-carrier-protein] reductase [NADH] (399 aa).

NAD(+) contacts are provided by residues 48–53 (GASTGY), 74–75 (FE), 111–112 (DA), and 139–140 (LA). Y225 contacts substrate. Y235 serves as the catalytic Proton donor. NAD(+) is bound by residues K244 and 274-276 (VVT).

It belongs to the TER reductase family. Monomer.

The enzyme catalyses a 2,3-saturated acyl-[ACP] + NAD(+) = a (2E)-enoyl-[ACP] + NADH + H(+). Its pathway is lipid metabolism; fatty acid biosynthesis. Its function is as follows. Involved in the final reduction of the elongation cycle of fatty acid synthesis (FAS II). Catalyzes the reduction of a carbon-carbon double bond in an enoyl moiety that is covalently linked to an acyl carrier protein (ACP). The sequence is that of Enoyl-[acyl-carrier-protein] reductase [NADH] from Erwinia tasmaniensis (strain DSM 17950 / CFBP 7177 / CIP 109463 / NCPPB 4357 / Et1/99).